The primary structure comprises 449 residues: Elongation factor 1-alpha (449 aa).

Residues 5–234 enclose the tr-type G domain; the sequence is KQHVSIVVIG…DNCDPPKRPV (230 aa). The interval 14–21 is G1; that stretch reads GHVDSGKS. Residue 14 to 21 participates in GTP binding; it reads GHVDSGKS. An N6,N6-dimethyllysine modification is found at lysine 55. Residues 70-74 form a G2 region; that stretch reads GITID. N6,N6,N6-trimethyllysine is present on lysine 79. The tract at residues 91–94 is G3; the sequence is DAPG. GTP contacts are provided by residues 91–95 and 153–156; these read DAPGH and NKMD. The segment at 153 to 156 is G4; the sequence is NKMD. N6,N6,N6-trimethyllysine is present on lysine 187. The G5 stretch occupies residues 194–196; the sequence is SGW. Lysine 265 is modified (N6-methyllysine). An N6,N6,N6-trimethyllysine mark is found at lysine 310 and lysine 400.

The protein belongs to the TRAFAC class translation factor GTPase superfamily. Classic translation factor GTPase family. EF-Tu/EF-1A subfamily.

Its subcellular location is the cytoplasm. Its function is as follows. This protein promotes the GTP-dependent binding of aminoacyl-tRNA to the A-site of ribosomes during protein biosynthesis. This is Elongation factor 1-alpha from Pyropia yezoensis (Susabi-nori).